The sequence spans 406 residues: 2,3-bisphosphoglycerate-independent phosphoglycerate mutase (406 aa).

This sequence belongs to the BPG-independent phosphoglycerate mutase family. A-PGAM subfamily.

The enzyme catalyses (2R)-2-phosphoglycerate = (2R)-3-phosphoglycerate. It participates in carbohydrate degradation; glycolysis; pyruvate from D-glyceraldehyde 3-phosphate: step 3/5. In terms of biological role, catalyzes the interconversion of 2-phosphoglycerate and 3-phosphoglycerate. This Methanococcus maripaludis (strain C5 / ATCC BAA-1333) protein is 2,3-bisphosphoglycerate-independent phosphoglycerate mutase.